The following is a 642-amino-acid chain: Terminase, large subunit (642 aa).

The tract at residues 1-48 (MISDAQKAANAAGAIATGLLSLIIPVPLTTVQWANKHYYLPKESSYTP) is interaction with the terminase small subunit. The Q motif signature appears at 42-51 (KESSYTPGRW). The Walker A motif motif lies at 76 to 83 (KSARVGYT). The interval 166–353 (NYREKSVDVV…LDALKDPNGL (188 aa)) is DNA packaging/ATPase. Positions 174 to 179 (VVCYDE) match the Walker B motif motif. Glu179 acts as the For ATPase activity in catalysis. Asp401 contacts Mg(2+). The interval 401 to 587 (DSQRNRFEMY…LWDNKKRRNE (187 aa)) is endonuclease. 491–498 (GASVYGKP) contacts ATP. The tract at residues 574-585 (KMRLLWDNKKRR) is basic. Residues 589-617 (LDCLVYAYAALRVSVQRWQLDLAVLAKSR) are leucine zipper. Residues 611-642 (AVLAKSREEETTRPTLKELAAKLSGGVNGYSR) are prohead binding.

This sequence belongs to the lambdavirus large terminase family. Heterotrimer of two small and one large terminase subunits. The catalytically competent terminase is composed of a tetramer of heterotrimers. The tetramer forms a ring structure large enough to encircle duplex DNA. Host IHFA/IHFB induces bending of viral DNA to facilitate the assembly of the terminase tetramer of heterotrimers. Interacts (via N-terminus) with the terminase small subunit (via C-terminus). Interacts (via C-terminus) with the portal protein; this interaction allows the packaging of viral DNA. The cofactor is Mg(2+).

It is found in the host cytoplasm. The catalysed reaction is Endonucleolytic cleavage of DNA to give specific double-stranded fragments with terminal 5'-phosphates.. The terminase large subunit acts as an ATP driven molecular motor necessary for viral DNA translocation into empty capsids and as an endonuclease that cuts the viral genome from the concetamer to initiate and to end the packaging reaction. The terminase lies at a unique vertex of the procapsid and is composed of two subunits, a small terminase subunit involved in viral DNA recognition (binding to packaging sequence cos), and a large terminase subunit possessing endonucleolytic and ATPase activities (DNA maturation and packaging). The terminase binds cooperatively with the host factor IHFA/IHFB to the cos site at the junction of adjacent viral genomes. The endonuclease activity cleaves the viral DNA generating 5'overhangs of 12 bp in length. The strand separation activity separates the cohesive ends generating the single-stranded 'sticky' ends of the mature genome. IHFA/IHFB is also necessary for the strand separation activity of the terminase. The terminase remains bound to the left end of the genome to be packaged, forming a stable DNA-terminase complex. In a reaction facilitated by the viral assembly catalyst gpFI, the DNA-terminase complex binds to the portal of the procapsid thereby activating the translocase activity of the terminase. The terminase packages the viral DNA into the procapsid until the next cos site on the concatemer reaches the complex. The downstream cos site is then cut generating the mature right end of the genome, the heterotrimer undocks from the DNA-filled head and remains bound to the left end of concatemer's next genome. This is Terminase, large subunit (2) from Escherichia coli (Bacteriophage 21).